Reading from the N-terminus, the 548-residue chain is Chaperonin GroEL (548 aa).

ATP contacts are provided by residues 30-33 (TLGP), Lys-51, 87-91 (DGTTT), Gly-415, 479-481 (NAA), and Asp-495.

It belongs to the chaperonin (HSP60) family. Forms a cylinder of 14 subunits composed of two heptameric rings stacked back-to-back. Interacts with the co-chaperonin GroES.

The protein resides in the cytoplasm. It carries out the reaction ATP + H2O + a folded polypeptide = ADP + phosphate + an unfolded polypeptide.. Together with its co-chaperonin GroES, plays an essential role in assisting protein folding. The GroEL-GroES system forms a nano-cage that allows encapsulation of the non-native substrate proteins and provides a physical environment optimized to promote and accelerate protein folding. This Serratia proteamaculans (strain 568) protein is Chaperonin GroEL.